The following is a 320-amino-acid chain: MSHSSTALLHPYVAARATEKFAPIYFFCHPLQSAETDVAERANKRPIWIMGHMVNANYQIDEFVNLGANSIETDVSFDSSANPEYTYHGVPCDCRGWCKKWEYFNNFLKALRKATTPGDSKYHEKLVLVVFDLKTGSLYDNQAYDAGKKLAKNLLQHYWNNGNNGGRAYIVLSIPNLAHYKLITGFKETLKTEGHPELMEKVGYDFSGNDNIDQVANAYKKAGVTGHVWQSDGITNCLLRGLDRVRKAVANRDSSNGYINKVYYWTVDKRQSTKNALDAGVDGIMPNYPDVIADVPNESAYKAKFRIASYDDNPWETFKN.

A signal peptide spans 1–15 (MSHSSTALLHPYVAA). Residues 16 to 41 (RATEKFAPIYFFCHPLQSAETDVAER) constitute a propeptide that is removed on maturation. His-52 is an active-site residue. The Mg(2+) site is built by Glu-72 and Asp-74. His-88 (nucleophile) is an active-site residue. Cystine bridges form between Cys-92–Cys-98 and Cys-94–Cys-237. A Mg(2+)-binding site is contributed by Asp-132. Asn-297 carries an N-linked (GlcNAc...) asparagine glycan.

The protein belongs to the arthropod phospholipase D family. Class II subfamily. Mg(2+) serves as cofactor. Expressed by the venom gland.

Its subcellular location is the secreted. It catalyses the reaction an N-(acyl)-sphingosylphosphocholine = an N-(acyl)-sphingosyl-1,3-cyclic phosphate + choline. The catalysed reaction is an N-(acyl)-sphingosylphosphoethanolamine = an N-(acyl)-sphingosyl-1,3-cyclic phosphate + ethanolamine. It carries out the reaction a 1-acyl-sn-glycero-3-phosphocholine = a 1-acyl-sn-glycero-2,3-cyclic phosphate + choline. The enzyme catalyses a 1-acyl-sn-glycero-3-phosphoethanolamine = a 1-acyl-sn-glycero-2,3-cyclic phosphate + ethanolamine. Its function is as follows. Dermonecrotic toxins cleave the phosphodiester linkage between the phosphate and headgroup of certain phospholipids (sphingolipid and lysolipid substrates), forming an alcohol (often choline) and a cyclic phosphate. This toxin acts on sphingomyelin (SM). It may also act on ceramide phosphoethanolamine (CPE), lysophosphatidylcholine (LPC) and lysophosphatidylethanolamine (LPE), but not on lysophosphatidylserine (LPS), and lysophosphatidylglycerol (LPG). It acts by transphosphatidylation, releasing exclusively cyclic phosphate products as second products. Induces dermonecrosis, hemolysis, increased vascular permeability, edema, inflammatory response, and platelet aggregation. This Loxosceles arizonica (Arizona brown spider) protein is Dermonecrotic toxin LarSicTox-alphaIB2a.